The sequence spans 316 residues: Apolipoprotein E (316 aa).

Residues 1–18 (MKVLWVALVVALLAGCQA) form the signal peptide. Repeat copies occupy residues 79 to 100 (VLMEETMKEVKAYREELEGQLA), 101 to 122 (PMAQETQARVSKELQAAQARLG), 123 to 144 (SDMEDLRNRLAQYRSEVQAMLG), 145 to 166 (QSTEELRARMASHLRKLRKRLL), 167 to 188 (RDADDLKKRLAVYQAGASEGAE), 189 to 210 (RSVSAIRERLRPLVEQSQSRAA), 211 to 232 (TLSTQVGQPLLDRAEAWRQKLH), and 233 to 254 (GRLEEVGVRAQDRLDKMRQQLE). The segment at 79–254 (VLMEETMKEV…RLDKMRQQLE (176 aa)) is 8 X 22 AA approximate tandem repeats. M142 bears the Methionine sulfoxide mark. S146 carries the post-translational modification Phosphoserine. The tract at residues 157–167 (HLRKLRKRLLR) is LDL and other lipoprotein receptors binding. A heparin-binding site is contributed by 161–164 (LRKR). Positions 209–289 (AATLSTQVGQ…SWFEPLVEDM (81 aa)) are lipid-binding and lipoprotein association. Heparin is bound at residue 228–235 (RQKLHGRL). A homooligomerization region spans residues 265 to 316 (SQIRLQAEAFQARLRSWFEPLVEDMQRQWAGLVEKVQLALHLSPTSPPSENH). Residues 277-289 (RLRSWFEPLVEDM) form a specificity for association with VLDL region.

The protein belongs to the apolipoprotein A1/A4/E family. In terms of assembly, homotetramer. May interact with ABCA1; functionally associated with ABCA1 in the biogenesis of HDLs. May interact with APP/A4 amyloid-beta peptide; the interaction is extremely stable in vitro but its physiological significance is unclear. May interact with MAPT. May interact with MAP2. In the cerebrospinal fluid, interacts with secreted SORL1. Interacts with PMEL; this allows the loading of PMEL luminal fragment on ILVs to induce fibril nucleation. Post-translationally, APOE exists as multiple glycosylated and sialylated glycoforms within cells and in plasma. The extent of glycosylation and sialylation are tissue and context specific. Glycated in plasma VLDL. In terms of processing, phosphorylated by FAM20C in the extracellular medium.

It localises to the secreted. The protein localises to the extracellular space. The protein resides in the extracellular matrix. It is found in the extracellular vesicle. Its subcellular location is the endosome. It localises to the multivesicular body. Functionally, APOE is an apolipoprotein, a protein associating with lipid particles, that mainly functions in lipoprotein-mediated lipid transport between organs via the plasma and interstitial fluids. APOE is a core component of plasma lipoproteins and is involved in their production, conversion and clearance. Apolipoproteins are amphipathic molecules that interact both with lipids of the lipoprotein particle core and the aqueous environment of the plasma. As such, APOE associates with chylomicrons, chylomicron remnants, very low density lipoproteins (VLDL) and intermediate density lipoproteins (IDL) but shows a preferential binding to high-density lipoproteins (HDL). It also binds a wide range of cellular receptors including the LDL receptor/LDLR and the very low-density lipoprotein receptor/VLDLR that mediate the cellular uptake of the APOE-containing lipoprotein particles. Finally, APOE also has a heparin-binding activity and binds heparan-sulfate proteoglycans on the surface of cells, a property that supports the capture and the receptor-mediated uptake of APOE-containing lipoproteins by cells. The polypeptide is Apolipoprotein E (APOE) (Ovis aries (Sheep)).